Reading from the N-terminus, the 89-residue chain is Dynein light chain (89 aa).

This sequence belongs to the dynein light chain family. As to expression, tegument.

The protein resides in the cytoplasm. It localises to the cytoskeleton. Its function is as follows. Acts as a non-catalytic accessory component of a dynein complex. This is Dynein light chain (DLC) from Schistosoma mansoni (Blood fluke).